Here is a 318-residue protein sequence, read N- to C-terminus: Type II restriction enzyme HaeIII (318 aa).

The enzyme catalyses Endonucleolytic cleavage of DNA to give specific double-stranded fragments with terminal 5'-phosphates.. A P subtype restriction enzyme that recognizes the double-stranded sequence 5'-GGCC-3' and cleaves after G-2. In Haemophilus aegyptius, this protein is Type II restriction enzyme HaeIII (haeIIIR).